Here is a 124-residue protein sequence, read N- to C-terminus: Small ribosomal subunit protein uS13 (124 aa).

Over residues lysine 93–alanine 117 the composition is skewed to basic residues. The tract at residues lysine 93–lysine 124 is disordered.

The protein belongs to the universal ribosomal protein uS13 family. Part of the 30S ribosomal subunit. Forms a loose heterodimer with protein S19. Forms two bridges to the 50S subunit in the 70S ribosome.

Located at the top of the head of the 30S subunit, it contacts several helices of the 16S rRNA. In the 70S ribosome it contacts the 23S rRNA (bridge B1a) and protein L5 of the 50S subunit (bridge B1b), connecting the 2 subunits; these bridges are implicated in subunit movement. Contacts the tRNAs in the A and P-sites. This chain is Small ribosomal subunit protein uS13, found in Mycoplasma genitalium (strain ATCC 33530 / DSM 19775 / NCTC 10195 / G37) (Mycoplasmoides genitalium).